The chain runs to 1030 residues: LPS-assembly protein LptD (1030 aa).

The signal sequence occupies residues 1–32 (MEGPPTAAHAAAPLRTAVFLALAASWQQPAVA). Residues 50–213 (VAKRKDGGAD…APAGWTCKPQ (164 aa)) are disordered. Residues 78–91 (LSQSNRAAPSTAVS) show a composition bias toward polar residues. Residues 126–137 (TEDEEDEESESA) show a composition bias toward acidic residues. Residues 161 to 171 (GTPPARAPRPE) show a composition bias toward pro residues.

This sequence belongs to the LptD family. In terms of assembly, component of the lipopolysaccharide transport and assembly complex. Interacts with LptE and LptA.

It is found in the cell outer membrane. Functionally, together with LptE, is involved in the assembly of lipopolysaccharide (LPS) at the surface of the outer membrane. This chain is LPS-assembly protein LptD, found in Methylococcus capsulatus (strain ATCC 33009 / NCIMB 11132 / Bath).